Consider the following 143-residue polypeptide: Ribosome maturation factor RimP (143 aa).

It belongs to the RimP family.

It is found in the cytoplasm. Required for maturation of 30S ribosomal subunits. The sequence is that of Ribosome maturation factor RimP from Borrelia hermsii (strain HS1 / DAH).